The following is a 149-amino-acid chain: Large ribosomal subunit protein uL15 (149 aa).

Basic and acidic residues predominate over residues 1-12 (MSEPIKLHDLRP). Positions 1–55 (MSEPIKLHDLRPAKGANKPKTRVGRGEASKGKTAGRGTKGTKARKQVSAAFEGGQ) are disordered.

This sequence belongs to the universal ribosomal protein uL15 family. In terms of assembly, part of the 50S ribosomal subunit.

Its function is as follows. Binds to the 23S rRNA. The sequence is that of Large ribosomal subunit protein uL15 from Corynebacterium kroppenstedtii (strain DSM 44385 / JCM 11950 / CIP 105744 / CCUG 35717).